Here is a 316-residue protein sequence, read N- to C-terminus: Tyrosine recombinase XerC (316 aa).

A Core-binding (CB) domain is found at 11–97 (SGLRKPLDQF…SLRSFFDFLI (87 aa)). The Tyr recombinase domain occupies 118-298 (PLPKNLDVDE…DFQHLADVYD (181 aa)). Active-site residues include arginine 157, lysine 181, histidine 250, arginine 253, and histidine 276. The active-site O-(3'-phospho-DNA)-tyrosine intermediate is the tyrosine 285.

Belongs to the 'phage' integrase family. XerC subfamily. As to quaternary structure, forms a cyclic heterotetrameric complex composed of two molecules of XerC and two molecules of XerD.

It localises to the cytoplasm. Functionally, site-specific tyrosine recombinase, which acts by catalyzing the cutting and rejoining of the recombining DNA molecules. The XerC-XerD complex is essential to convert dimers of the bacterial chromosome into monomers to permit their segregation at cell division. It also contributes to the segregational stability of plasmids. The protein is Tyrosine recombinase XerC of Vibrio vulnificus (strain CMCP6).